The sequence spans 531 residues: Probable peptide ABC transporter periplasmic-binding protein y4tO (531 aa).

A signal peptide (tat-type signal) is located at residues 1 to 32 (MTISRRDLFKAGLAAGAALSVPSLLRAQTAVA).

Belongs to the bacterial solute-binding protein 5 family. Predicted to be exported by the Tat system. The position of the signal peptide cleavage has not been experimentally proven.

It localises to the periplasm. Its function is as follows. Probably part of the binding-protein-dependent transport system y4tOPQRS for a peptide. The protein is Probable peptide ABC transporter periplasmic-binding protein y4tO of Sinorhizobium fredii (strain NBRC 101917 / NGR234).